The primary structure comprises 421 residues: D-aspartate ligase (421 aa).

Positions 130–332 constitute an ATP-grasp domain; that stretch reads YEVCEEYDLP…LARFVTEDRV (203 aa). 161–224 is a binding site for ATP; the sequence is PFEFPVALKP…QDFIPGDDSN (64 aa). Mg(2+) is bound by residues Asp-290, Glu-304, and Asn-306.

It depends on Mg(2+) as a cofactor.

The enzyme catalyses [beta-GlcNAc-(1-&gt;4)-Mur2Ac(oyl-L-Ala-gamma-D-Glu-L-Lys-D-Ala-D-Ala)](n) + n D-aspartate + n ATP = [beta-GlcNAc-(1-&gt;4)-Mur2Ac(oyl-L-Ala-gamma-D-Glu-6-N-(beta-D-Asp)-L-Lys-D-Ala-D-Ala)]n + n ADP + n phosphate + n H(+). Its pathway is cell wall biogenesis; peptidoglycan biosynthesis. Its function is as follows. Catalyzes the addition of D-aspartate onto the lysine residue in the peptidoglycan precursor UDP-MurNAc-pentapeptide. The ligation occurs between the beta-carboxylate of D-Asp and the epsilon-amino group of L-Lys. Is highly specific for D-aspartate, as L-aspartate, D-glutamate, D-alanine, D-iso-asparagine and D-malate are not substrates. In Enterococcus faecium (strain Aus0004), this protein is D-aspartate ligase.